A 585-amino-acid chain; its full sequence is Pyruvate kinase (585 aa).

R32 contributes to the substrate binding site. Residues N34, S36, D66, and T67 each contribute to the K(+) site. ATP is bound at residue 34-37 (NFSH). 2 residues coordinate ATP: R73 and K156. E221 is a Mg(2+) binding site. Residues G244, D245, and T277 each contribute to the substrate site. D245 is a binding site for Mg(2+).

Belongs to the pyruvate kinase family. The protein in the C-terminal section; belongs to the PEP-utilizing enzyme family. Mg(2+) is required as a cofactor. It depends on K(+) as a cofactor.

The catalysed reaction is pyruvate + ATP = phosphoenolpyruvate + ADP + H(+). The protein operates within carbohydrate degradation; glycolysis; pyruvate from D-glyceraldehyde 3-phosphate: step 5/5. This is Pyruvate kinase (pyk) from Staphylococcus aureus (strain MRSA252).